Reading from the N-terminus, the 325-residue chain is Elongation factor P--(R)-beta-lysine ligase (325 aa).

76-78 lines the substrate pocket; sequence SPE. ATP-binding positions include 100–102 and Asn109; that span reads RNE. Residue Tyr118 coordinates substrate. An ATP-binding site is contributed by 244-245; that stretch reads EL. Glu251 contributes to the substrate binding site. Gly300 provides a ligand contact to ATP.

Belongs to the class-II aminoacyl-tRNA synthetase family. EpmA subfamily. In terms of assembly, homodimer.

It carries out the reaction D-beta-lysine + L-lysyl-[protein] + ATP = N(6)-((3R)-3,6-diaminohexanoyl)-L-lysyl-[protein] + AMP + diphosphate + H(+). Its function is as follows. With EpmB is involved in the beta-lysylation step of the post-translational modification of translation elongation factor P (EF-P). Catalyzes the ATP-dependent activation of (R)-beta-lysine produced by EpmB, forming a lysyl-adenylate, from which the beta-lysyl moiety is then transferred to the epsilon-amino group of a conserved specific lysine residue in EF-P. The polypeptide is Elongation factor P--(R)-beta-lysine ligase (Klebsiella pneumoniae (strain 342)).